A 350-amino-acid polypeptide reads, in one-letter code: uncharacterized protein (350 aa).

Residues 1–27 (MKNKKRVLIASSLSCAILLLSAATTQA) form the signal peptide. Residues 28–71 (NSAHKDSQDQNKKEHVDKSQQKEKRNVTNKDKNSTVPDDIGKNG) are disordered. Residues 30–60 (AHKDSQDQNKKEHVDKSQQKEKRNVTNKDKN) show a composition bias toward basic and acidic residues.

The protein belongs to the aerolysin family.

This is an uncharacterized protein from Staphylococcus aureus (strain MSSA476).